A 323-amino-acid polypeptide reads, in one-letter code: GTP 3',8-cyclase (323 aa).

In terms of domain architecture, Radical SAM core spans 4–233; sequence KYGREIDYLR…NGPAKYISIE (230 aa). Arginine 13 serves as a coordination point for GTP. [4Fe-4S] cluster is bound by residues cysteine 20 and cysteine 24. Tyrosine 26 is a binding site for S-adenosyl-L-methionine. [4Fe-4S] cluster is bound at residue cysteine 27. GTP is bound at residue arginine 63. Residue glycine 67 participates in S-adenosyl-L-methionine binding. Position 94 (threonine 94) interacts with GTP. Serine 118 lines the S-adenosyl-L-methionine pocket. Lysine 154 serves as a coordination point for GTP. Methionine 188 contacts S-adenosyl-L-methionine. Positions 250 and 253 each coordinate [4Fe-4S] cluster. 255–257 is a GTP binding site; it reads RIR. Position 267 (cysteine 267) interacts with [4Fe-4S] cluster.

This sequence belongs to the radical SAM superfamily. MoaA family. As to quaternary structure, monomer and homodimer. It depends on [4Fe-4S] cluster as a cofactor.

It catalyses the reaction GTP + AH2 + S-adenosyl-L-methionine = (8S)-3',8-cyclo-7,8-dihydroguanosine 5'-triphosphate + 5'-deoxyadenosine + L-methionine + A + H(+). Its pathway is cofactor biosynthesis; molybdopterin biosynthesis. Its function is as follows. Catalyzes the cyclization of GTP to (8S)-3',8-cyclo-7,8-dihydroguanosine 5'-triphosphate. This Clostridium perfringens (strain SM101 / Type A) protein is GTP 3',8-cyclase.